Here is a 449-residue protein sequence, read N- to C-terminus: MREIVHVQGGQCGNQIGAKFWEVISDEHGIDPTGTYCGDSDLQLERINVFYNEATGGRFVPRAILMDLEPGTMDSVRAGPFGQLFRPDNFVFGQTGAGNNWAKGHYTEGAELIDSVLDVVRKEAEGCDCLQGFQITHSLGGGTGSGMGTLLISKVREEYPDRIMETFSVFPSPKVSDTVVEPYNATLSVHQLVENADEVQVIDNEALYDICFRTLKLTTPTYGDLNHLVSAAMSGVTCCLRFPGQLNSDLRKLAVNLVPFPRLHFFLIGFAPLTSRGSQQYRALSVPELTQQMFDAKNMMCASDPRHGRYLTASAMFRGRMSTKEVDEQMLNVQNKNSSYFVEWIPNNMKSSVCDIPPKGLKMSVTFVGNSTAIQEMFKRVSDQFTAMFRRKAFLHWYTGEGMDEMEFTEAESNMNDLVSEYQQYQDATAEEEGEFDEEEGEMGAEEGA.

GTP-binding residues include Q11, E69, S138, G142, T143, G144, N204, and N226. E69 serves as a coordination point for Mg(2+). The tract at residues 426 to 449 (QDATAEEEGEFDEEEGEMGAEEGA) is disordered. Acidic residues predominate over residues 429 to 449 (TAEEEGEFDEEEGEMGAEEGA).

Belongs to the tubulin family. In terms of assembly, dimer of alpha and beta chains. A typical microtubule is a hollow water-filled tube with an outer diameter of 25 nm and an inner diameter of 15 nM. Alpha-beta heterodimers associate head-to-tail to form protofilaments running lengthwise along the microtubule wall with the beta-tubulin subunit facing the microtubule plus end conferring a structural polarity. Microtubules usually have 13 protofilaments but different protofilament numbers can be found in some organisms and specialized cells. It depends on Mg(2+) as a cofactor.

The protein localises to the cytoplasm. Its subcellular location is the cytoskeleton. Tubulin is the major constituent of microtubules, a cylinder consisting of laterally associated linear protofilaments composed of alpha- and beta-tubulin heterodimers. Microtubules grow by the addition of GTP-tubulin dimers to the microtubule end, where a stabilizing cap forms. Below the cap, tubulin dimers are in GDP-bound state, owing to GTPase activity of alpha-tubulin. This is Tubulin beta chain from Toxoplasma gondii.